We begin with the raw amino-acid sequence, 636 residues long: Threonine--tRNA ligase (636 aa).

A TGS domain is found at 1-60 (MPIINFNNKEILFNYPISIIEIIKKFDKNLSENCIAAKINGKLLDVSEIINYDGSLELVK). The interval 242 to 533 (DHRKIGKKLD…ITEEFSGKYP (292 aa)) is catalytic. Zn(2+) contacts are provided by cysteine 333, histidine 384, and histidine 510.

The protein belongs to the class-II aminoacyl-tRNA synthetase family. As to quaternary structure, homodimer. The cofactor is Zn(2+).

It localises to the cytoplasm. The catalysed reaction is tRNA(Thr) + L-threonine + ATP = L-threonyl-tRNA(Thr) + AMP + diphosphate + H(+). Catalyzes the attachment of threonine to tRNA(Thr) in a two-step reaction: L-threonine is first activated by ATP to form Thr-AMP and then transferred to the acceptor end of tRNA(Thr). Also edits incorrectly charged L-seryl-tRNA(Thr). The sequence is that of Threonine--tRNA ligase from Wigglesworthia glossinidia brevipalpis.